The chain runs to 272 residues: uncharacterized protein (272 aa).

The signal sequence occupies residues 1-20 (MKLRKIFLLPLISLSTLSVA). A lipid anchor (N-palmitoyl cysteine) is attached at Cys21. A lipid anchor (S-diacylglycerol cysteine) is attached at Cys21.

Belongs to the MG439/MG440 family.

It localises to the cell membrane. This is an uncharacterized protein from Mycoplasma genitalium (strain ATCC 33530 / DSM 19775 / NCTC 10195 / G37) (Mycoplasmoides genitalium).